The primary structure comprises 427 residues: Trigger factor (427 aa).

Residues 163–248 enclose the PPIase FKBP-type domain; sequence GDTVILDFEG…LHEIKTKEVP (86 aa).

The protein belongs to the FKBP-type PPIase family. Tig subfamily.

It localises to the cytoplasm. The enzyme catalyses [protein]-peptidylproline (omega=180) = [protein]-peptidylproline (omega=0). Functionally, involved in protein export. Acts as a chaperone by maintaining the newly synthesized protein in an open conformation. Functions as a peptidyl-prolyl cis-trans isomerase. This chain is Trigger factor, found in Listeria monocytogenes serotype 4a (strain HCC23).